A 350-amino-acid chain; its full sequence is Very-long-chain 3-oxoacyl-CoA reductase (350 aa).

The helical transmembrane segment at Ala-20–Ala-40 threads the bilayer. Val-66, Asp-120, Asn-147, Tyr-221, Lys-225, Val-254, and Ser-256 together coordinate NADP(+). Tyr-221 serves as the catalytic Proton donor. Lys-225 serves as the catalytic Lowers pKa of active site Tyr.

This sequence belongs to the short-chain dehydrogenases/reductases (SDR) family.

It localises to the endoplasmic reticulum membrane. The enzyme catalyses a very-long-chain (3R)-3-hydroxyacyl-CoA + NADP(+) = a very-long-chain 3-oxoacyl-CoA + NADPH + H(+). It functions in the pathway lipid metabolism; fatty acid biosynthesis. Its function is as follows. Component of the microsomal membrane bound fatty acid elongation system, which produces the 26-carbon very long-chain fatty acids (VLCFA) from palmitate. Catalyzes the reduction of the 3-ketoacyl-CoA intermediate that is formed in each cycle of fatty acid elongation. VLCFAs serve as precursors for ceramide and sphingolipids. The chain is Very-long-chain 3-oxoacyl-CoA reductase from Lodderomyces elongisporus (strain ATCC 11503 / CBS 2605 / JCM 1781 / NBRC 1676 / NRRL YB-4239) (Yeast).